The primary structure comprises 204 residues: Ribosome maturation factor RimP (204 aa).

Positions 176 to 204 (GNFDESQFDEIEESEGEEADEAEQPPTKH) are disordered. The segment covering 181 to 198 (SQFDEIEESEGEEADEAE) has biased composition (acidic residues).

This sequence belongs to the RimP family.

It is found in the cytoplasm. In terms of biological role, required for maturation of 30S ribosomal subunits. In Cereibacter sphaeroides (strain ATCC 17029 / ATH 2.4.9) (Rhodobacter sphaeroides), this protein is Ribosome maturation factor RimP.